Reading from the N-terminus, the 586-residue chain is Monoterpene synthase TPS4, chloroplastic (586 aa).

Residues M1–M47 constitute a chloroplast transit peptide. The Mg(2+) site is built by D340, D344, D485, T489, and E493. The DDXXD motif signature appears at D340–D344.

The protein belongs to the terpene synthase family. Tpsg subfamily. As to quaternary structure, monomer. It depends on Mg(2+) as a cofactor.

The protein localises to the plastid. It localises to the chloroplast. The catalysed reaction is (2E)-geranyl diphosphate + H2O = (2E)-geraniol + diphosphate. The protein operates within secondary metabolite biosynthesis; terpenoid biosynthesis. Functionally, monoterpene synthase involved in the biosynthesis of volatile organic compounds. Mediates the conversion of (2E)-geranyl diphosphate (GPP) into the acyclic monoterpene, geraniol. Does not use (2E,6E)-farnesyl diphosphate (FPP) as substrate. The polypeptide is Monoterpene synthase TPS4, chloroplastic (Cananga odorata (Ylang-ylang tree)).